The chain runs to 496 residues: Probable chlorophyll(ide) b reductase NYC1, chloroplastic (496 aa).

The transit peptide at 1–43 (MTTLTKIQVYPQVLEHRLFFRDPIRVGSRLTCRERSNRVYVHR) directs the protein to the chloroplast. Transmembrane regions (helical) follow at residues 105-125 (YIVTMTSTGAILLIGFQLSGG) and 132-152 (LVWYSWLGGIIIGTMTGANMV). 166 to 190 (ITGSTRGLGKALAREFLLSGDRVIV) is an NAD(+) binding site. Residues 195–224 (SESVDMTVKELEQNLKEIMSNASESARKKL) are a coiled coil. Tyr-330 serves as the catalytic Proton acceptor. The helical transmembrane segment at 470–490 (WVSVFSLSVVCAFIILQSTTP) threads the bilayer.

Belongs to the short-chain dehydrogenases/reductases (SDR) family. In terms of assembly, interacts with NOL to form a complex that acts as a chlorophyll b reductase. Interacts with HCAR, RCCR, SGR1 and the LHCII complex. Part of a SGR1-CCE-LHCII complex, which acts in chlorophyll breakdown.

The protein resides in the plastid. The protein localises to the chloroplast thylakoid membrane. The enzyme catalyses 7(1)-hydroxychlorophyllide a + NAD(+) = chlorophyllide b + NADH + H(+). It catalyses the reaction 7(1)-hydroxychlorophyllide a + NADP(+) = chlorophyllide b + NADPH + H(+). Its function is as follows. Involved in chlorophyll b degradation. Belongs to the chlorophyll catabolic enzymes (CCEs). The sequence is that of Probable chlorophyll(ide) b reductase NYC1, chloroplastic (NYC1) from Arabidopsis thaliana (Mouse-ear cress).